The primary structure comprises 55 residues: UPF0434 protein BARBAKC583_1098 (55 aa).

The protein belongs to the UPF0434 family.

The polypeptide is UPF0434 protein BARBAKC583_1098 (Bartonella bacilliformis (strain ATCC 35685 / KC583 / Herrer 020/F12,63)).